A 459-amino-acid chain; its full sequence is Glutamyl-tRNA(Gln) amidotransferase subunit A, mitochondrial (459 aa).

Catalysis depends on charge relay system residues lysine 37 and serine 114. The active-site Acyl-ester intermediate is the serine 138.

Belongs to the amidase family. GatA subfamily. In terms of assembly, subunit of the heterotrimeric GatFAB amidotransferase (AdT) complex, composed of A, B and F subunits.

It localises to the mitochondrion. The enzyme catalyses L-glutamyl-tRNA(Gln) + L-glutamine + ATP + H2O = L-glutaminyl-tRNA(Gln) + L-glutamate + ADP + phosphate + H(+). In terms of biological role, allows the formation of correctly charged Gln-tRNA(Gln) through the transamidation of misacylated Glu-tRNA(Gln) in the mitochondria. The reaction takes place in the presence of glutamine and ATP through an activated gamma-phospho-Glu-tRNA(Gln). In Yarrowia lipolytica (strain CLIB 122 / E 150) (Yeast), this protein is Glutamyl-tRNA(Gln) amidotransferase subunit A, mitochondrial.